The following is a 200-amino-acid chain: MTKVLVLYYSSYGHIETMAQAVAEGARSVPGTEVAVKRVPELVPEEVARNAGMKLDQPAPVATVAELAEYDAIIVGSPTRFGRMTSQMANFLDQTGGLWAKGALNGKVGAAFTSTASQHGGQETTLFSILTNLLHHGMVVVGLPYSYEGLSGVEQVKGGTPYGASTIADGDGSRRPTEVELGGARYQGALVARTAAKLRG.

In terms of domain architecture, Flavodoxin-like spans 4 to 191 (VLVLYYSSYG…GGARYQGALV (188 aa)). Residues 10-15 (SSYGHI) and 79-81 (TRF) contribute to the FMN site. Residue Tyr-12 coordinates NAD(+). Residue Trp-99 coordinates substrate. FMN-binding positions include 114–120 (STASQHG) and His-135.

It belongs to the WrbA family. FMN serves as cofactor.

It catalyses the reaction a quinone + NADH + H(+) = a quinol + NAD(+). It carries out the reaction a quinone + NADPH + H(+) = a quinol + NADP(+). This is NAD(P)H dehydrogenase (quinone) from Rhodospirillum centenum (strain ATCC 51521 / SW).